Reading from the N-terminus, the 248-residue chain is Geranylgeranylglyceryl phosphate synthase (248 aa).

Mg(2+)-binding residues include aspartate 25 and serine 50. Sn-glycerol 1-phosphate contacts are provided by residues 170 to 176 (YLEAGSG), 201 to 202 (GG), and 223 to 224 (GT).

The protein belongs to the GGGP/HepGP synthase family. Group II subfamily. The cofactor is Mg(2+).

Its subcellular location is the cytoplasm. The catalysed reaction is sn-glycerol 1-phosphate + (2E,6E,10E)-geranylgeranyl diphosphate = sn-3-O-(geranylgeranyl)glycerol 1-phosphate + diphosphate. It functions in the pathway membrane lipid metabolism; glycerophospholipid metabolism. Its function is as follows. Prenyltransferase that catalyzes the transfer of the geranylgeranyl moiety of geranylgeranyl diphosphate (GGPP) to the C3 hydroxyl of sn-glycerol-1-phosphate (G1P). This reaction is the first ether-bond-formation step in the biosynthesis of archaeal membrane lipids. The chain is Geranylgeranylglyceryl phosphate synthase from Methanococcus aeolicus (strain ATCC BAA-1280 / DSM 17508 / OCM 812 / Nankai-3).